The following is a 146-amino-acid chain: Large ribosomal subunit protein bL19 (146 aa).

The tract at residues 119–146 is disordered; the sequence is DYRKKGEKGVEKVETTPVSADIETQVAE.

The protein belongs to the bacterial ribosomal protein bL19 family.

Functionally, this protein is located at the 30S-50S ribosomal subunit interface and may play a role in the structure and function of the aminoacyl-tRNA binding site. In Bartonella tribocorum (strain CIP 105476 / IBS 506), this protein is Large ribosomal subunit protein bL19.